Here is a 571-residue protein sequence, read N- to C-terminus: Proline--tRNA ligase (571 aa).

Belongs to the class-II aminoacyl-tRNA synthetase family. ProS type 1 subfamily. In terms of assembly, homodimer.

It is found in the cytoplasm. It catalyses the reaction tRNA(Pro) + L-proline + ATP = L-prolyl-tRNA(Pro) + AMP + diphosphate. Catalyzes the attachment of proline to tRNA(Pro) in a two-step reaction: proline is first activated by ATP to form Pro-AMP and then transferred to the acceptor end of tRNA(Pro). As ProRS can inadvertently accommodate and process non-cognate amino acids such as alanine and cysteine, to avoid such errors it has two additional distinct editing activities against alanine. One activity is designated as 'pretransfer' editing and involves the tRNA(Pro)-independent hydrolysis of activated Ala-AMP. The other activity is designated 'posttransfer' editing and involves deacylation of mischarged Ala-tRNA(Pro). The misacylated Cys-tRNA(Pro) is not edited by ProRS. This chain is Proline--tRNA ligase, found in Shewanella putrefaciens (strain CN-32 / ATCC BAA-453).